The primary structure comprises 156 residues: MKGLIQRVSEASVAVDGETIARIGPGLLLLLGVERNDTLNEAKELCRKVLSYRVFPDEQGRMNVNVQAAGGSLLVVPQFTLAADTSSGTRPGFSLAAAPELANRLYGDFVAEASGLLGAGRVGTGEFGADMKVALINDGPVTFMLESGQRGSCTKM.

The Gly-cisPro motif, important for rejection of L-amino acids signature appears at 139–140 (GP).

Belongs to the DTD family. As to quaternary structure, homodimer.

It is found in the cytoplasm. The enzyme catalyses glycyl-tRNA(Ala) + H2O = tRNA(Ala) + glycine + H(+). It carries out the reaction a D-aminoacyl-tRNA + H2O = a tRNA + a D-alpha-amino acid + H(+). Its function is as follows. An aminoacyl-tRNA editing enzyme that deacylates mischarged D-aminoacyl-tRNAs. Also deacylates mischarged glycyl-tRNA(Ala), protecting cells against glycine mischarging by AlaRS. Acts via tRNA-based rather than protein-based catalysis; rejects L-amino acids rather than detecting D-amino acids in the active site. By recycling D-aminoacyl-tRNA to D-amino acids and free tRNA molecules, this enzyme counteracts the toxicity associated with the formation of D-aminoacyl-tRNA entities in vivo and helps enforce protein L-homochirality. This chain is D-aminoacyl-tRNA deacylase, found in Marinobacter nauticus (strain ATCC 700491 / DSM 11845 / VT8) (Marinobacter aquaeolei).